Consider the following 410-residue polypeptide: MTPQLNNLTLPIYMDYQATTPIDPRVMEAMLPYFTTKFGNPHSRSHSFGWEAENAVEEARSMVAKLIGADTKEIIFTSGATESNNLAIKGIAKFYSNKKNHIITVVSEHKCVLDACRHLEQEGIKITYLPIKPNGIIDLETLKNAITDQTMLVSVMVVNNEIGVVQPLKEIGKICREKGVFFHSDIAQGFGKIPIDVNAFNIDLASISGHKIYGPKGIGALYVRKKPRVRITPLINGGGQERGMRSGTLPTPLIVGLGMAAEIAYSEMEKDTKHVNYLFDRFLNNIHKRISEVYLNGDKNQRYKGNLNLSFAGVEGESMILAIKDLAVSSGSACTSASLEPSYVLRSIGIGEELAHTAIRFGIGRFTTEQEVDYAVNLICSKIDKLRALSPLWEMMQEGIDLKKIKWAVH.

Pyridoxal 5'-phosphate is bound by residues 80–81, Asn160, Gln188, and 208–210; these read AT and SGH. Lys211 carries the post-translational modification N6-(pyridoxal phosphate)lysine. Residue Thr248 coordinates pyridoxal 5'-phosphate. Residue Cys334 is the Cysteine persulfide intermediate of the active site. Residue Cys334 coordinates [2Fe-2S] cluster.

This sequence belongs to the class-V pyridoxal-phosphate-dependent aminotransferase family. NifS/IscS subfamily. Homodimer. Forms a heterotetramer with IscU, interacts with other sulfur acceptors. Pyridoxal 5'-phosphate is required as a cofactor.

It is found in the cytoplasm. The catalysed reaction is (sulfur carrier)-H + L-cysteine = (sulfur carrier)-SH + L-alanine. It functions in the pathway cofactor biosynthesis; iron-sulfur cluster biosynthesis. Functionally, master enzyme that delivers sulfur to a number of partners involved in Fe-S cluster assembly, tRNA modification or cofactor biosynthesis. Catalyzes the removal of elemental sulfur atoms from cysteine to produce alanine. Functions as a sulfur delivery protein for Fe-S cluster synthesis onto IscU, an Fe-S scaffold assembly protein, as well as other S acceptor proteins. This Rickettsia rickettsii (strain Iowa) protein is Cysteine desulfurase IscS.